The following is a 486-amino-acid chain: Malonate-semialdehyde dehydrogenase 1 (486 aa).

NAD(+)-binding residues include phenylalanine 154, lysine 178, glutamate 181, arginine 182, and serine 231. Cysteine 286 functions as the Nucleophile in the catalytic mechanism. Residue glutamate 386 participates in NAD(+) binding.

Belongs to the aldehyde dehydrogenase family. IolA subfamily. As to quaternary structure, homotetramer.

The enzyme catalyses 3-oxopropanoate + NAD(+) + CoA + H2O = hydrogencarbonate + acetyl-CoA + NADH + H(+). It carries out the reaction 2-methyl-3-oxopropanoate + NAD(+) + CoA + H2O = propanoyl-CoA + hydrogencarbonate + NADH + H(+). It participates in polyol metabolism; myo-inositol degradation into acetyl-CoA; acetyl-CoA from myo-inositol: step 7/7. Functionally, catalyzes the oxidation of malonate semialdehyde (MSA) and methylmalonate semialdehyde (MMSA) into acetyl-CoA and propanoyl-CoA, respectively. Is involved in a myo-inositol catabolic pathway. Bicarbonate, and not CO2, is the end-product of the enzymatic reaction. This chain is Malonate-semialdehyde dehydrogenase 1, found in Bacillus thuringiensis (strain Al Hakam).